Here is an 83-residue protein sequence, read N- to C-terminus: Putative defensin-like protein 67 (83 aa).

A signal peptide spans 1–24 (MGSSKLMVTCIVVAMLTISCDILS). Intrachain disulfides connect cysteine 38/cysteine 82, cysteine 42/cysteine 65, cysteine 51/cysteine 80, and cysteine 55/cysteine 81.

Belongs to the DEFL family.

The protein localises to the secreted. The polypeptide is Putative defensin-like protein 67 (Arabidopsis thaliana (Mouse-ear cress)).